The primary structure comprises 131 residues: Small ribosomal subunit protein bS6 (131 aa).

The interval 96–131 is disordered; it reads VTAPSPMMKEEKSKSLLAKDEAAAPAPAPATEQATA. A compositionally biased stretch (basic and acidic residues) spans 103–117; it reads MKEEKSKSLLAKDEA. Residues 118 to 131 show a composition bias toward low complexity; the sequence is AAPAPAPATEQATA.

It belongs to the bacterial ribosomal protein bS6 family.

In terms of biological role, binds together with bS18 to 16S ribosomal RNA. The polypeptide is Small ribosomal subunit protein bS6 (Methylobacillus flagellatus (strain ATCC 51484 / DSM 6875 / VKM B-1610 / KT)).